Consider the following 441-residue polypeptide: Acetyltransferase TRI7 (441 aa).

7 consecutive transmembrane segments (helical) span residues 14-34 (GILY…LIII), 75-95 (SLTL…LVLT), 158-178 (IWFI…LDII), 306-326 (IAFV…FCWG), 336-356 (LAFF…QALC), 377-397 (LVGY…YLYH), and 421-441 (TATM…GIEV).

It belongs to the wax synthase family.

The protein localises to the membrane. It participates in sesquiterpene biosynthesis; trichothecene biosynthesis. In terms of biological role, acetyltransferase; part of the core gene cluster that mediates the biosynthesis of trichothecenes, a very large family of chemically related bicyclic sesquiterpene compounds acting as mycotoxins, including T2-toxin. The biosynthesis of trichothecenes begins with the cyclization of farnesyl diphosphate to trichodiene and is catalyzed by the trichodiene synthase TRI5. Trichodiene undergoes a series of oxygenations catalyzed by the cytochrome P450 monooxygenase TRI4. TRI4 controls the addition of four oxygens at C-2, C-3, C-11, and the C-12, C-13-epoxide to form the intermediate isotrichotriol. Isotrichotriol then undergoes a non-enzymatic isomerization and cyclization to form isotrichodermol. During this process, the oxygen at the C-2 position becomes the pyran ring oxygen and the hydroxyl group at C-11 is lost. More complex type A trichothecenes are built by modifying isotrichodermol through a series of paired hydroxylation and acetylation or acylation steps. Isotrichodermol is converted to isotrichodermin by the acetyltransferase TRI101. TRI101 encodes a C-3 transacetylase that acts as a self-protection or resistance factor during biosynthesis and that the presence of a free C-3 hydroxyl group is a key component of Fusarium trichothecene phytotoxicity. A second hydroxyl group is added to C-15 by the trichothecene C-15 hydroxylase TRI11, producing 15-decalonectrin, which is then acetylated by TRI3, producing calonectrin. A third hydroxyl group is added at C-4 by the cytochrome P450 monooxygenase TRI13, converting calonectrin to 3,15-diacetoxyspirpenol, which is subsequently acetylated by the acetyltransferase TRI7. A fourth hydroxyl group is added to C-8 by the cytochrome P450 monooxygenase TRI1, followed by the addition of an isovaleryl moiety by TRI16. Finally, the acetyl group is removed from the C-3 position by the trichothecene C-3 esterase TRI8 to produce T-2 toxin. This chain is Acetyltransferase TRI7, found in Fusarium sporotrichioides.